A 1392-amino-acid polypeptide reads, in one-letter code: ATP-dependent helicase/nuclease subunit A (1392 aa).

Positions 4–595 constitute a UvrD-like helicase ATP-binding domain; it reads FKPTPAQSKA…IVLGENFRSM (592 aa). Residue 25–32 coordinates ATP; sequence ASAGSGKT. One can recognise a UvrD-like helicase C-terminal domain in the interval 623 to 929; sequence AHLKYAATYY…NVMTIHGSKG (307 aa).

This sequence belongs to the helicase family. AddA subfamily. In terms of assembly, heterodimer of AddA and AddB/RexB. The cofactor is Mg(2+).

It carries out the reaction Couples ATP hydrolysis with the unwinding of duplex DNA by translocating in the 3'-5' direction.. The enzyme catalyses ATP + H2O = ADP + phosphate + H(+). The heterodimer acts as both an ATP-dependent DNA helicase and an ATP-dependent, dual-direction single-stranded exonuclease. Recognizes the chi site generating a DNA molecule suitable for the initiation of homologous recombination. The AddA nuclease domain is required for chi fragment generation; this subunit has the helicase and 3' -&gt; 5' nuclease activities. The sequence is that of ATP-dependent helicase/nuclease subunit A from Limosilactobacillus reuteri subsp. reuteri (strain JCM 1112) (Lactobacillus reuteri).